The chain runs to 758 residues: Translation initiation factor IF-2 (758 aa).

The disordered stretch occupies residues 55-168 (EKNVGKQATQ…KTHQPSIPVK (114 aa)). Composition is skewed to polar residues over residues 60 to 78 (KQAT…QQNH) and 86 to 95 (QRQQSATSKP). A compositionally biased stretch (low complexity) spans 96 to 136 (KVNNQQHSNSSNEKSKNTKGNQNRNMTQNNNNNNNNNNNNR). The tr-type G domain occupies 259–428 (ERPPVVTIMG…LLVAEVGELK (170 aa)). Positions 268–275 (GHVDHGKT) are G1. A GTP-binding site is contributed by 268 to 275 (GHVDHGKT). The segment at 293-297 (GITQH) is G2. Residues 314–317 (DTPG) are G3. GTP contacts are provided by residues 314-318 (DTPGH) and 368-371 (NKMD). The tract at residues 368 to 371 (NKMD) is G4. The interval 404-406 (SAL) is G5.

This sequence belongs to the TRAFAC class translation factor GTPase superfamily. Classic translation factor GTPase family. IF-2 subfamily.

Its subcellular location is the cytoplasm. In terms of biological role, one of the essential components for the initiation of protein synthesis. Protects formylmethionyl-tRNA from spontaneous hydrolysis and promotes its binding to the 30S ribosomal subunits. Also involved in the hydrolysis of GTP during the formation of the 70S ribosomal complex. This chain is Translation initiation factor IF-2, found in Lysinibacillus sphaericus (strain C3-41).